Reading from the N-terminus, the 177-residue chain is Chorismate pyruvate-lyase (177 aa).

Met36, Arg78, Leu116, and Glu157 together coordinate substrate.

The protein belongs to the UbiC family. Monomer.

The protein localises to the cytoplasm. It carries out the reaction chorismate = 4-hydroxybenzoate + pyruvate. It functions in the pathway cofactor biosynthesis; ubiquinone biosynthesis. Removes the pyruvyl group from chorismate, with concomitant aromatization of the ring, to provide 4-hydroxybenzoate (4HB) for the ubiquinone pathway. The sequence is that of Chorismate pyruvate-lyase from Pectobacterium atrosepticum (strain SCRI 1043 / ATCC BAA-672) (Erwinia carotovora subsp. atroseptica).